The chain runs to 454 residues: NADP-specific glutamate dehydrogenase (454 aa).

The residue at position 2 (Ser2) is an N-acetylserine. Lys114 is an active-site residue.

The protein belongs to the Glu/Leu/Phe/Val dehydrogenases family. As to quaternary structure, homohexamer.

The catalysed reaction is L-glutamate + NADP(+) + H2O = 2-oxoglutarate + NH4(+) + NADPH + H(+). The chain is NADP-specific glutamate dehydrogenase (GDH) from Neurospora intermedia.